A 160-amino-acid polypeptide reads, in one-letter code: uncharacterized protein (160 aa).

The chain crosses the membrane as a helical span at residues 47 to 67; sequence LLGGFANVAAILTPLVAVLAY.

It localises to the membrane. This is an uncharacterized protein from Sinorhizobium fredii (strain NBRC 101917 / NGR234).